The sequence spans 253 residues: Hydroxyacylglutathione hydrolase (253 aa).

Residues His54, His56, Asp58, His59, His112, Asp131, and His169 each coordinate Zn(2+).

This sequence belongs to the metallo-beta-lactamase superfamily. Glyoxalase II family. Monomer. Zn(2+) serves as cofactor.

It catalyses the reaction an S-(2-hydroxyacyl)glutathione + H2O = a 2-hydroxy carboxylate + glutathione + H(+). It participates in secondary metabolite metabolism; methylglyoxal degradation; (R)-lactate from methylglyoxal: step 2/2. Thiolesterase that catalyzes the hydrolysis of S-D-lactoyl-glutathione to form glutathione and D-lactic acid. The sequence is that of Hydroxyacylglutathione hydrolase from Bartonella tribocorum (strain CIP 105476 / IBS 506).